The chain runs to 469 residues: 6-phospho-beta-galactosidase (469 aa).

Q19, H116, N159, E160, and N297 together coordinate D-galactose 6-phosphate. E160 acts as the Proton donor in catalysis. E375 (nucleophile) is an active-site residue. D-galactose 6-phosphate-binding residues include S428, W429, K435, and Y437.

This sequence belongs to the glycosyl hydrolase 1 family.

The catalysed reaction is a 6-phospho-beta-D-galactoside + H2O = D-galactose 6-phosphate + an alcohol. It functions in the pathway carbohydrate metabolism; lactose degradation; D-galactose 6-phosphate and beta-D-glucose from lactose 6-phosphate: step 1/1. This is 6-phospho-beta-galactosidase from Streptococcus equi subsp. zooepidemicus (strain MGCS10565).